Consider the following 591-residue polypeptide: CTP synthase 1-B (591 aa).

One can recognise a Glutamine amidotransferase type-1 domain in the interval 300–554 (SIALVGKYTK…LASVGRLSQY (255 aa)). Catalysis depends on for GATase activity residues Cys399, His526, and Glu528. Residues 562–572 (SPRDTYSDRSE) are compositionally biased toward basic and acidic residues. The segment at 562–581 (SPRDTYSDRSENSSPDAEIA) is disordered.

This sequence belongs to the CTP synthase family.

The catalysed reaction is UTP + L-glutamine + ATP + H2O = CTP + L-glutamate + ADP + phosphate + 2 H(+). It participates in pyrimidine metabolism; CTP biosynthesis via de novo pathway; CTP from UDP: step 2/2. Functionally, this enzyme is involved in the de novo synthesis of CTP, a precursor of DNA, RNA and phospholipids. Catalyzes the ATP-dependent amination of UTP to CTP with either L-glutamine or ammonia as a source of nitrogen. This is CTP synthase 1-B (ctps1-b) from Xenopus laevis (African clawed frog).